The following is a 495-amino-acid chain: WD repeat-containing protein 37 (495 aa).

The segment at methionine 1–aspartate 34 is disordered. Positions serine 22 to serine 31 are enriched in polar residues. WD repeat units follow at residues glycine 154–lysine 194 and glycine 197–glutamine 236. The disordered stretch occupies residues proline 237–cysteine 268. A compositionally biased stretch (acidic residues) spans glycine 246–alanine 264. WD repeat units lie at residues serine 280–serine 319, glycine 322–valine 361, glycine 366–alanine 404, arginine 407–leucine 446, and glycine 453–glutamate 494.

The protein resides in the cytoplasm. It is found in the nucleus. In Xenopus laevis (African clawed frog), this protein is WD repeat-containing protein 37 (wdr37).